Here is a 289-residue protein sequence, read N- to C-terminus: 4-diphosphocytidyl-2-C-methyl-D-erythritol kinase (289 aa).

Residue Lys11 is part of the active site. 95 to 105 (PMGGGIGGGSS) serves as a coordination point for ATP. Asp137 is a catalytic residue.

The protein belongs to the GHMP kinase family. IspE subfamily.

The catalysed reaction is 4-CDP-2-C-methyl-D-erythritol + ATP = 4-CDP-2-C-methyl-D-erythritol 2-phosphate + ADP + H(+). It participates in isoprenoid biosynthesis; isopentenyl diphosphate biosynthesis via DXP pathway; isopentenyl diphosphate from 1-deoxy-D-xylulose 5-phosphate: step 3/6. In terms of biological role, catalyzes the phosphorylation of the position 2 hydroxy group of 4-diphosphocytidyl-2C-methyl-D-erythritol. In Aeromonas salmonicida (strain A449), this protein is 4-diphosphocytidyl-2-C-methyl-D-erythritol kinase.